The primary structure comprises 787 residues: Endonuclease MutS2 (787 aa).

Residue 329 to 336 participates in ATP binding; it reads GPNTGGKT. The region spanning 712 to 787 is the Smr domain; that stretch reads INLLGCTVDE…DAGVTIVDFK (76 aa).

This sequence belongs to the DNA mismatch repair MutS family. MutS2 subfamily. As to quaternary structure, homodimer. Binds to stalled ribosomes, contacting rRNA.

Functionally, endonuclease that is involved in the suppression of homologous recombination and thus may have a key role in the control of bacterial genetic diversity. Its function is as follows. Acts as a ribosome collision sensor, splitting the ribosome into its 2 subunits. Detects stalled/collided 70S ribosomes which it binds and splits by an ATP-hydrolysis driven conformational change. Acts upstream of the ribosome quality control system (RQC), a ribosome-associated complex that mediates the extraction of incompletely synthesized nascent chains from stalled ribosomes and their subsequent degradation. Probably generates substrates for RQC. This chain is Endonuclease MutS2, found in Lachnospira eligens (strain ATCC 27750 / DSM 3376 / VPI C15-48 / C15-B4) (Eubacterium eligens).